A 446-amino-acid chain; its full sequence is Ribosomal protein uS12 methylthiotransferase RimO (446 aa).

The MTTase N-terminal domain maps to 10-122 (KTLHMVSLGC…IDELVNEKRS (113 aa)). [4Fe-4S] cluster contacts are provided by cysteine 19, cysteine 53, cysteine 85, cysteine 154, cysteine 158, and cysteine 161. Residues 140-369 (TGSSYHAYVK…GEIISQTTQE (230 aa)) enclose the Radical SAM core domain. Residues 372-446 (ESEVGKTFEV…GDKLLATVIK (75 aa)) form the TRAM domain.

The protein belongs to the methylthiotransferase family. RimO subfamily. The cofactor is [4Fe-4S] cluster.

It is found in the cytoplasm. The catalysed reaction is L-aspartate(89)-[ribosomal protein uS12]-hydrogen + (sulfur carrier)-SH + AH2 + 2 S-adenosyl-L-methionine = 3-methylsulfanyl-L-aspartate(89)-[ribosomal protein uS12]-hydrogen + (sulfur carrier)-H + 5'-deoxyadenosine + L-methionine + A + S-adenosyl-L-homocysteine + 2 H(+). Its function is as follows. Catalyzes the methylthiolation of an aspartic acid residue of ribosomal protein uS12. In Aliarcobacter butzleri (strain RM4018) (Arcobacter butzleri), this protein is Ribosomal protein uS12 methylthiotransferase RimO.